We begin with the raw amino-acid sequence, 398 residues long: Odorant receptor 59b (398 aa).

Over 1 to 46 (MAVFKLIKPAPLTEKVQSRQGNIYLYRAMWLIGWIPPKEGVLRYVY) the chain is Cytoplasmic. A helical transmembrane segment spans residues 47–67 (LFWTCVPFAFGVFYLPVGFII). Topologically, residues 68-84 (SYVQEFKNFTPGEFLTS) are extracellular. Residues 85–105 (LQVCINVYGASVKSTITYLFL) form a helical membrane-spanning segment. The Cytoplasmic portion of the chain corresponds to 106–141 (WRLRKTEILLDSLDKRLANDSDRERIHNMVARCNYA). A helical transmembrane segment spans residues 142-162 (FLIYSFIYCGYAGSTFLSYAL). The Extracellular portion of the chain corresponds to 163–179 (SGRPPWSVYNPFIDWRD). Residues 180–200 (GMGSLWIQAIFEYITMSFAVL) form a helical membrane-spanning segment. Residues 201 to 269 (QDQLSDTYPL…DMIRPMISRT (69 aa)) lie on the Cytoplasmic side of the membrane. The helical transmembrane segment at 270 to 290 (IFVQFALIGSVLGLTLVNVFF) threads the bilayer. Residues 291–293 (FSN) lie on the Extracellular side of the membrane. Residues 294 to 314 (FWKGVASLLFVITILLQTFPF) form a helical membrane-spanning segment. Topologically, residues 315 to 348 (CYTCNMLIDDAQDLSNEIFQSNWVDAEPRYKATL) are cytoplasmic. A helical membrane pass occupies residues 349 to 369 (VLFMHHVQQPIIFIAGGIFPI). Residues 370-398 (SMNSNITVAKFAFSIITIVRQMNLAEQFQ) lie on the Extracellular side of the membrane. N-linked (GlcNAc...) asparagine glycosylation is present at Asn-374.

The protein belongs to the insect chemoreceptor superfamily. Heteromeric odorant receptor channel (TC 1.A.69) family. Or2a subfamily. As to quaternary structure, interacts with Orco. Complexes exist early in the endomembrane system in olfactory sensory neurons (OSNs), coupling these complexes to the conserved ciliary trafficking pathway. Expressed in olfactory sensory neurons in the antenna.

Its subcellular location is the cell membrane. In terms of biological role, odorant receptor which mediates acceptance or avoidance behavior, depending on its substrates. The odorant receptor repertoire encodes a large collection of odor stimuli that vary widely in identity, intensity, and duration. Forms a complex with Orco to form odorant-sensing units, providing sensitive and prolonged odorant signaling and calcium permeability. Also plays a role in the response to N,N-Diethyl-meta-toluamide (DEET), the most widely used insect repellent worldwide. In Drosophila melanogaster (Fruit fly), this protein is Odorant receptor 59b (Or59b).